The sequence spans 201 residues: Pyridoxine/pyridoxamine 5'-phosphate oxidase (201 aa).

Residues 45 to 50 (RMVLLK), 65 to 66 (YT), arginine 71, lysine 72, and glutamine 94 contribute to the FMN site. Lysine 50 contributes to the substrate binding site. Substrate-binding residues include tyrosine 112, arginine 116, and serine 120. Residues 129-130 (QS) and tryptophan 174 each bind FMN. A substrate-binding site is contributed by 180 to 182 (RLH). Arginine 184 is a binding site for FMN.

It belongs to the pyridoxamine 5'-phosphate oxidase family. In terms of assembly, homodimer. The cofactor is FMN.

It carries out the reaction pyridoxamine 5'-phosphate + O2 + H2O = pyridoxal 5'-phosphate + H2O2 + NH4(+). It catalyses the reaction pyridoxine 5'-phosphate + O2 = pyridoxal 5'-phosphate + H2O2. Its pathway is cofactor metabolism; pyridoxal 5'-phosphate salvage; pyridoxal 5'-phosphate from pyridoxamine 5'-phosphate: step 1/1. It functions in the pathway cofactor metabolism; pyridoxal 5'-phosphate salvage; pyridoxal 5'-phosphate from pyridoxine 5'-phosphate: step 1/1. Functionally, catalyzes the oxidation of either pyridoxine 5'-phosphate (PNP) or pyridoxamine 5'-phosphate (PMP) into pyridoxal 5'-phosphate (PLP). In Rhodospirillum rubrum (strain ATCC 11170 / ATH 1.1.1 / DSM 467 / LMG 4362 / NCIMB 8255 / S1), this protein is Pyridoxine/pyridoxamine 5'-phosphate oxidase.